The sequence spans 160 residues: SsrA-binding protein (160 aa).

Belongs to the SmpB family.

Its subcellular location is the cytoplasm. Its function is as follows. Required for rescue of stalled ribosomes mediated by trans-translation. Binds to transfer-messenger RNA (tmRNA), required for stable association of tmRNA with ribosomes. tmRNA and SmpB together mimic tRNA shape, replacing the anticodon stem-loop with SmpB. tmRNA is encoded by the ssrA gene; the 2 termini fold to resemble tRNA(Ala) and it encodes a 'tag peptide', a short internal open reading frame. During trans-translation Ala-aminoacylated tmRNA acts like a tRNA, entering the A-site of stalled ribosomes, displacing the stalled mRNA. The ribosome then switches to translate the ORF on the tmRNA; the nascent peptide is terminated with the 'tag peptide' encoded by the tmRNA and targeted for degradation. The ribosome is freed to recommence translation, which seems to be the essential function of trans-translation. The sequence is that of SsrA-binding protein from Rhodospirillum rubrum (strain ATCC 11170 / ATH 1.1.1 / DSM 467 / LMG 4362 / NCIMB 8255 / S1).